Consider the following 299-residue polypeptide: GTPase Era (299 aa).

The region spanning 5-175 (RSGFVCLVGR…IDVLAAALPP (171 aa)) is the Era-type G domain. The G1 stretch occupies residues 13–20 (GRPNTGKS). 13–20 (GRPNTGKS) lines the GTP pocket. The G2 stretch occupies residues 39–43 (QTTRH). Positions 60 to 63 (DTPG) are G3. GTP is bound by residues 60–64 (DTPGL) and 124–127 (TKID). The interval 124–127 (TKID) is G4. A G5 region spans residues 154–156 (VSA). The KH type-2 domain maps to 206–285 (VRDELPHSLA…YLDLRVKVAK (80 aa)).

The protein belongs to the TRAFAC class TrmE-Era-EngA-EngB-Septin-like GTPase superfamily. Era GTPase family. Monomer.

The protein resides in the cell envelope. It is found in the secreted. The protein localises to the cell wall. Exhibits GTPase activity. Binds RNA but is probably not involved in ribosome assembly in mycobacteria. This chain is GTPase Era, found in Mycobacterium avium (strain 104).